Consider the following 130-residue polypeptide: Small ribosomal subunit protein uS8 (130 aa).

Belongs to the universal ribosomal protein uS8 family. Part of the 30S ribosomal subunit.

Its function is as follows. One of the primary rRNA binding proteins, it binds directly to 16S rRNA central domain where it helps coordinate assembly of the platform of the 30S subunit. The sequence is that of Small ribosomal subunit protein uS8 from Methanocorpusculum labreanum (strain ATCC 43576 / DSM 4855 / Z).